A 495-amino-acid polypeptide reads, in one-letter code: Ectonucleoside triphosphate diphosphohydrolase 2 (495 aa).

Residues 1–7 (MAGKVRS) are Cytoplasmic-facing. A helical transmembrane segment spans residues 8 to 28 (LLPPLLLAAAGLAGLLLLCVP). The Extracellular portion of the chain corresponds to 29–462 (TRDVREPPAL…PGLRKGTDFS (434 aa)). N-linked (GlcNAc...) asparagine glycosylation occurs at Asn64. Cysteines 75 and 99 form a disulfide. A glycan (N-linked (GlcNAc...) asparagine) is linked at Asn129. Catalysis depends on Glu165, which acts as the Proton acceptor. 204-208 (GASTQ) is an ATP binding site. Disulfide bonds link Cys242/Cys284, Cys265/Cys310, Cys323/Cys328, and Cys377/Cys399. N-linked (GlcNAc...) asparagine glycosylation is present at Asn294. Residues Asn378 and Asn443 are each glycosylated (N-linked (GlcNAc...) asparagine). The helical transmembrane segment at 463 to 483 (SWVVLLLLFASALLAALVLLL) threads the bilayer. Over 484 to 495 (RQVHSAKLPSTI) the chain is Cytoplasmic.

It belongs to the GDA1/CD39 NTPase family. Ca(2+) is required as a cofactor. The cofactor is Mg(2+). In terms of tissue distribution, brain, placenta, skeletal muscle, kidney, pancreas, heart, ovary, testis, colon, small intestine, prostate and pancreas. No expression in adult thymus, spleen, lung, liver and peripheral blood leukocytes.

Its subcellular location is the cell membrane. The protein localises to the endoplasmic reticulum membrane. In the nervous system, could hydrolyze ATP and other nucleotides to regulate purinergic neurotransmission. Hydrolyzes ADP only to a marginal extent. The order of activity with different substrates is ATP &gt; GTP &gt; CTP = ITP &gt; UTP &gt;&gt; ADP = UDP. This chain is Ectonucleoside triphosphate diphosphohydrolase 2 (ENTPD2), found in Homo sapiens (Human).